The following is a 962-amino-acid chain: Glycine dehydrogenase (decarboxylating) (962 aa).

At lysine 709 the chain carries N6-(pyridoxal phosphate)lysine.

The protein belongs to the GcvP family. The glycine cleavage system is composed of four proteins: P, T, L and H. Requires pyridoxal 5'-phosphate as cofactor.

The catalysed reaction is N(6)-[(R)-lipoyl]-L-lysyl-[glycine-cleavage complex H protein] + glycine + H(+) = N(6)-[(R)-S(8)-aminomethyldihydrolipoyl]-L-lysyl-[glycine-cleavage complex H protein] + CO2. Its function is as follows. The glycine cleavage system catalyzes the degradation of glycine. The P protein binds the alpha-amino group of glycine through its pyridoxal phosphate cofactor; CO(2) is released and the remaining methylamine moiety is then transferred to the lipoamide cofactor of the H protein. In Shewanella pealeana (strain ATCC 700345 / ANG-SQ1), this protein is Glycine dehydrogenase (decarboxylating).